The sequence spans 315 residues: L-lactate dehydrogenase (315 aa).

NAD(+) contacts are provided by residues valine 14, aspartate 35, tyrosine 67, and 81 to 82; that span reads GV. Substrate-binding positions include glutamine 84, arginine 91, and 123–126; that span reads NPVD. NAD(+) is bound by residues 121–123 and serine 146; that span reads ASN. 151–154 contributes to the substrate binding site; the sequence is DSAR. The Proton acceptor role is filled by histidine 178. Position 219 is a phosphotyrosine (tyrosine 219). Threonine 228 serves as a coordination point for substrate.

It belongs to the LDH/MDH superfamily. LDH family. Homotetramer.

It is found in the cytoplasm. The catalysed reaction is (S)-lactate + NAD(+) = pyruvate + NADH + H(+). The protein operates within fermentation; pyruvate fermentation to lactate; (S)-lactate from pyruvate: step 1/1. In terms of biological role, catalyzes the conversion of lactate to pyruvate. In Malacoplasma penetrans (strain HF-2) (Mycoplasma penetrans), this protein is L-lactate dehydrogenase.